A 361-amino-acid chain; its full sequence is Anthranilate phosphoribosyltransferase (361 aa).

Residues Gly80, 83 to 84 (GD), Thr88, 90 to 93 (NVST), 108 to 116 (KHGNYSVSS), and Ser120 each bind 5-phospho-alpha-D-ribose 1-diphosphate. Gly80 lines the anthranilate pocket. Ser92 contacts Mg(2+). Asn111 serves as a coordination point for anthranilate. Residue Arg166 participates in anthranilate binding. Residues Asp224 and Glu225 each coordinate Mg(2+). Residues 338–361 (EGDGEAASTDSAAASTTAGPEDDD) form a disordered region. Positions 343–355 (AASTDSAAASTTA) are enriched in low complexity.

Belongs to the anthranilate phosphoribosyltransferase family. In terms of assembly, homodimer. Requires Mg(2+) as cofactor.

It catalyses the reaction N-(5-phospho-beta-D-ribosyl)anthranilate + diphosphate = 5-phospho-alpha-D-ribose 1-diphosphate + anthranilate. It participates in amino-acid biosynthesis; L-tryptophan biosynthesis; L-tryptophan from chorismate: step 2/5. Functionally, catalyzes the transfer of the phosphoribosyl group of 5-phosphorylribose-1-pyrophosphate (PRPP) to anthranilate to yield N-(5'-phosphoribosyl)-anthranilate (PRA). In Halorubrum lacusprofundi (strain ATCC 49239 / DSM 5036 / JCM 8891 / ACAM 34), this protein is Anthranilate phosphoribosyltransferase.